The chain runs to 108 residues: Small ribosomal subunit protein bS16 (108 aa).

This sequence belongs to the bacterial ribosomal protein bS16 family.

This is Small ribosomal subunit protein bS16 from Orientia tsutsugamushi (strain Boryong) (Rickettsia tsutsugamushi).